We begin with the raw amino-acid sequence, 200 residues long: MKKITIIAVSKNRNINNIEEAIRSGINNFGENYLQESLIKIENLKKYKNITWHFIGKIQSNKTKKIAQNFSWCQTVDREKIAVLLNKFRPKNLPPINVLIQINNLKELQNNRYIDQYQELAQLILSMPNLNLRGIMAVPSIKTNVIENNLQYEKIKTIFNRFKRQYSSVDTLSLGTSVDIKESLLATSNMVRIGRNIFNI.

At Lys-11 the chain carries N6-(pyridoxal phosphate)lysine.

This sequence belongs to the pyridoxal phosphate-binding protein YggS/PROSC family. Monomer.

Functionally, pyridoxal 5'-phosphate (PLP)-binding protein, which is involved in PLP homeostasis. The sequence is that of Pyridoxal phosphate homeostasis protein from Buchnera aphidicola subsp. Acyrthosiphon pisum (strain APS) (Acyrthosiphon pisum symbiotic bacterium).